A 457-amino-acid chain; its full sequence is Pup--protein ligase (457 aa).

Glu-9 is a Mg(2+) binding site. Position 53 (Arg-53) interacts with ATP. Tyr-55 lines the Mg(2+) pocket. Asp-57 functions as the Proton acceptor in the catalytic mechanism. Position 63 (Glu-63) interacts with Mg(2+). Residues Thr-66 and Trp-424 each contribute to the ATP site.

This sequence belongs to the Pup ligase/Pup deamidase family. Pup-conjugating enzyme subfamily.

It catalyses the reaction ATP + [prokaryotic ubiquitin-like protein]-L-glutamate + [protein]-L-lysine = ADP + phosphate + N(6)-([prokaryotic ubiquitin-like protein]-gamma-L-glutamyl)-[protein]-L-lysine.. It functions in the pathway protein degradation; proteasomal Pup-dependent pathway. It participates in protein modification; protein pupylation. Its function is as follows. Catalyzes the covalent attachment of the prokaryotic ubiquitin-like protein modifier Pup to the proteasomal substrate proteins, thereby targeting them for proteasomal degradation. This tagging system is termed pupylation. The ligation reaction involves the side-chain carboxylate of the C-terminal glutamate of Pup and the side-chain amino group of a substrate lysine. The polypeptide is Pup--protein ligase (Xylanimonas cellulosilytica (strain DSM 15894 / JCM 12276 / CECT 5975 / KCTC 9989 / LMG 20990 / NBRC 107835 / XIL07)).